We begin with the raw amino-acid sequence, 363 residues long: 3-dehydroquinate synthase (363 aa).

Residues 70 to 75, 104 to 108, 128 to 129, lysine 141, lysine 150, and 168 to 171 each bind NAD(+); these read SGETSK, GVIGD, TT, and TLDT. Zn(2+) is bound by residues glutamate 183, histidine 245, and histidine 262.

This sequence belongs to the sugar phosphate cyclases superfamily. Dehydroquinate synthase family. Requires Co(2+) as cofactor. Zn(2+) serves as cofactor. It depends on NAD(+) as a cofactor.

The protein localises to the cytoplasm. The catalysed reaction is 7-phospho-2-dehydro-3-deoxy-D-arabino-heptonate = 3-dehydroquinate + phosphate. The protein operates within metabolic intermediate biosynthesis; chorismate biosynthesis; chorismate from D-erythrose 4-phosphate and phosphoenolpyruvate: step 2/7. Functionally, catalyzes the conversion of 3-deoxy-D-arabino-heptulosonate 7-phosphate (DAHP) to dehydroquinate (DHQ). The chain is 3-dehydroquinate synthase from Alkaliphilus oremlandii (strain OhILAs) (Clostridium oremlandii (strain OhILAs)).